We begin with the raw amino-acid sequence, 380 residues long: 4-hydroxy-3-methylbut-2-en-1-yl diphosphate synthase (flavodoxin) (380 aa).

Cys280, Cys283, Cys315, and Glu322 together coordinate [4Fe-4S] cluster.

This sequence belongs to the IspG family. The cofactor is [4Fe-4S] cluster.

The catalysed reaction is (2E)-4-hydroxy-3-methylbut-2-enyl diphosphate + oxidized [flavodoxin] + H2O + 2 H(+) = 2-C-methyl-D-erythritol 2,4-cyclic diphosphate + reduced [flavodoxin]. The protein operates within isoprenoid biosynthesis; isopentenyl diphosphate biosynthesis via DXP pathway; isopentenyl diphosphate from 1-deoxy-D-xylulose 5-phosphate: step 5/6. Its function is as follows. Converts 2C-methyl-D-erythritol 2,4-cyclodiphosphate (ME-2,4cPP) into 1-hydroxy-2-methyl-2-(E)-butenyl 4-diphosphate. This chain is 4-hydroxy-3-methylbut-2-en-1-yl diphosphate synthase (flavodoxin), found in Cutibacterium acnes (strain DSM 16379 / KPA171202) (Propionibacterium acnes).